The following is a 242-amino-acid chain: Large ribosomal subunit protein uL1 (242 aa).

Belongs to the universal ribosomal protein uL1 family. In terms of assembly, part of the 50S ribosomal subunit.

Functionally, binds directly to 23S rRNA. The L1 stalk is quite mobile in the ribosome, and is involved in E site tRNA release. In terms of biological role, protein L1 is also a translational repressor protein, it controls the translation of the L11 operon by binding to its mRNA. This Dictyoglomus thermophilum (strain ATCC 35947 / DSM 3960 / H-6-12) protein is Large ribosomal subunit protein uL1.